Reading from the N-terminus, the 114-residue chain is Probable acid stress chaperone HdeA (114 aa).

A signal peptide spans 1–26; the sequence is MIKALFNKNTALAAVAILALSGGAMA. Cysteine 46 and cysteine 94 form a disulfide bridge.

Belongs to the HdeA family.

The protein resides in the periplasm. In terms of biological role, required for optimal acid stress protection. Exhibits a chaperone-like activity only at low pH by suppressing non-specifically the aggregation of denaturated periplasmic proteins. Contributes to acid resistance. Not required for wild-type virulence in the BALB/c mouse model. The polypeptide is Probable acid stress chaperone HdeA (Brucella abortus (strain 2308)).